The primary structure comprises 349 residues: N-formyl peptide receptor 3 (349 aa).

Over 1–27 (METNFSIPLNETEEVLPEPAGHTVLWI) the chain is Extracellular. Asparagine 4 and asparagine 10 each carry an N-linked (GlcNAc...) asparagine glycan. The chain crosses the membrane as a helical span at residues 28–50 (FSLLVHGVTFIFGVLGNGLVIWV). The Cytoplasmic portion of the chain corresponds to 51–61 (AGFRMTRTVNT). The helical transmembrane segment at 62–83 (ICYLNLALADFSFSAILPFHMV) threads the bilayer. At 84–100 (SVAMREKWPFGTFLCKL) the chain is on the extracellular side. A disulfide bridge connects residues cysteine 98 and cysteine 176. Residues 101–121 (VHVMIDINLFVSVYLITIIAL) form a helical membrane-spanning segment. Topologically, residues 122–140 (DRCICVLHPAWAQNHRTMS) are cytoplasmic. A helical transmembrane segment spans residues 141 to 162 (LAKRVMTGLWILTIVLTLPNFI). The Extracellular segment spans residues 163 to 205 (FWTTISTTNGDTYCIFNYPFWGDTVVERMNVFITMAKVSLILH). Residues 206-226 (FIIGFSIPMSIITVCYGIIVA) traverse the membrane as a helical segment. Residues 227-242 (KIHKKRMTKSSRPLHI) are Cytoplasmic-facing. A helical membrane pass occupies residues 243–266 (FTAVVASFFICWFPYELTGILMAV). Residues 267–286 (WLKEILLNGKYKIILVLINP) are Extracellular-facing. Residues 287–306 (TSSLAFFNSCLNPSLYVFMG) form a helical membrane-spanning segment. The Cytoplasmic portion of the chain corresponds to 307–349 (HNFQERLIRSLPTSLERALTEVPDSAQTSNTHTTSASPPEETE). Residues 327 to 349 (EVPDSAQTSNTHTTSASPPEETE) form a disordered region. Positions 331-343 (SAQTSNTHTTSAS) are enriched in polar residues.

The protein belongs to the G-protein coupled receptor 1 family.

The protein resides in the cell membrane. Low affinity receptor for N-formyl-methionyl peptides, which are powerful neutrophils chemotactic factors. Binding of FMLP to the receptor causes activation of neutrophils. This response is mediated via a G-protein that activates a phosphatidylinositol-calcium second messenger system. This chain is N-formyl peptide receptor 3 (FPR3), found in Macaca mulatta (Rhesus macaque).